A 278-amino-acid polypeptide reads, in one-letter code: Ribosomal RNA small subunit methyltransferase A (278 aa).

Residues Asn28, Leu30, Gly55, Glu77, Asp103, and Asn122 each coordinate S-adenosyl-L-methionine.

This sequence belongs to the class I-like SAM-binding methyltransferase superfamily. rRNA adenine N(6)-methyltransferase family. RsmA subfamily.

It localises to the cytoplasm. The enzyme catalyses adenosine(1518)/adenosine(1519) in 16S rRNA + 4 S-adenosyl-L-methionine = N(6)-dimethyladenosine(1518)/N(6)-dimethyladenosine(1519) in 16S rRNA + 4 S-adenosyl-L-homocysteine + 4 H(+). Functionally, specifically dimethylates two adjacent adenosines (A1518 and A1519) in the loop of a conserved hairpin near the 3'-end of 16S rRNA in the 30S particle. May play a critical role in biogenesis of 30S subunits. This is Ribosomal RNA small subunit methyltransferase A from Cereibacter sphaeroides (strain ATCC 17025 / ATH 2.4.3) (Rhodobacter sphaeroides).